The sequence spans 483 residues: Regulatory protein ViaA (483 aa).

Belongs to the ViaA family. In terms of assembly, homodimer. Interacts with RavA.

The protein localises to the cytoplasm. In terms of biological role, component of the RavA-ViaA chaperone complex, which may act on the membrane to optimize the function of some of the respiratory chains. ViaA stimulates the ATPase activity of RavA. The polypeptide is Regulatory protein ViaA (Escherichia coli O9:H4 (strain HS)).